We begin with the raw amino-acid sequence, 833 residues long: Leucine--tRNA ligase (833 aa).

The short motif at 41-52 is the 'HIGH' region element; sequence PYPSGAGLHVGH. Positions 610–614 match the 'KMSKS' region motif; that stretch reads KMSKS. Residue Lys613 coordinates ATP.

It belongs to the class-I aminoacyl-tRNA synthetase family.

It is found in the cytoplasm. The catalysed reaction is tRNA(Leu) + L-leucine + ATP = L-leucyl-tRNA(Leu) + AMP + diphosphate. The chain is Leucine--tRNA ligase from Streptococcus mutans serotype c (strain ATCC 700610 / UA159).